A 1086-amino-acid chain; its full sequence is WD repeat-containing protein 64 (1086 aa).

WD repeat units follow at residues 129-168 (RRRD…WITG), 170-199 (DYLG…SSQE), 321-360 (AMPR…KPVG), 364-403 (GHMF…VLQV), 411-448 (PGDM…QDTK), 453-492 (THER…QIYQ), 498-537 (GLSI…EMKM), 560-602 (QVKQ…PYLQ), and 642-683 (IVDV…VKEI). The tract at residues 724-749 (ICSSTQCDSSKGPQSSKGSKQSIHDA) is disordered. Over residues 732-744 (SSKGPQSSKGSKQ) the composition is skewed to low complexity. WD repeat units lie at residues 765–806 (ASRK…KDML), 809–850 (TKHS…DPPH), and 863–902 (AHSL…YCGY). Residues 1047–1069 (DKVKREEAPEMTEGSRRKSLKRN) form a disordered region. Over residues 1049-1062 (VKREEAPEMTEGSR) the composition is skewed to basic and acidic residues.

This chain is WD repeat-containing protein 64 (Wdr64), found in Mus musculus (Mouse).